Consider the following 212-residue polypeptide: ATP-dependent dethiobiotin synthetase BioD (212 aa).

Position 12–17 (12–17 (DCGKTF)) interacts with ATP. Threonine 16 serves as a coordination point for Mg(2+). Residue lysine 33 is part of the active site. Serine 37 contacts substrate. Residues aspartate 50, 110-113 (EGAG), and 170-171 (NC) contribute to the ATP site. Positions 50 and 110 each coordinate Mg(2+).

It belongs to the dethiobiotin synthetase family. Homodimer. Requires Mg(2+) as cofactor.

It is found in the cytoplasm. It catalyses the reaction (7R,8S)-7,8-diammoniononanoate + CO2 + ATP = (4R,5S)-dethiobiotin + ADP + phosphate + 3 H(+). Its pathway is cofactor biosynthesis; biotin biosynthesis; biotin from 7,8-diaminononanoate: step 1/2. Its function is as follows. Catalyzes a mechanistically unusual reaction, the ATP-dependent insertion of CO2 between the N7 and N8 nitrogen atoms of 7,8-diaminopelargonic acid (DAPA, also called 7,8-diammoniononanoate) to form a ureido ring. The chain is ATP-dependent dethiobiotin synthetase BioD from Legionella pneumophila subsp. pneumophila (strain Philadelphia 1 / ATCC 33152 / DSM 7513).